The sequence spans 770 residues: Protein PAT1 homolog 1 (770 aa).

A disordered region spans residues 1-26; that stretch reads MFRYESLEDCPLDEDEDAFQGLGEED. The interval 1 to 84 is region A; interaction with DDX6/RCK; the sequence is MFRYESLEDC…EMDLLGDHEE (84 aa). Residues 1 to 397 form an involved in nuclear foci localization region; the sequence is MFRYESLEDC…HRSSHQDHLR (397 aa). Residues 7 to 26 are compositionally biased toward acidic residues; that stretch reads LEDCPLDEDEDAFQGLGEED. The region N; interaction with decapping machinery stretch occupies residues 85-388; it reads NLAERLSKMV…LNGAGDRGSH (304 aa). The Nuclear export signal motif lies at 86-95; that stretch reads LAERLSKMVI. Phosphoserine is present on S177. The residue at position 178 (T178) is a Phosphothreonine. A phosphoserine mark is found at S179 and S184. T194 is subject to Phosphothreonine. R217, R223, and R263 each carry asymmetric dimethylarginine. The segment at 223 to 397 is involved in RNA-binding; that stretch reads RYPAPYGERM…HRSSHQDHLR (175 aa). Phosphoserine is present on S278. R284 is modified (asymmetric dimethylarginine). The segment covering 314-323 has biased composition (low complexity); sequence GFRAFFSAPP. Disordered stretches follow at residues 314–344 and 360–399; these read GFRA…QNLR and QHRR…LRKD. Over residues 324 to 337 the composition is skewed to pro residues; that stretch reads SATPPPQQHPPGPG. The span at 367–380 shows a compositional bias: low complexity; the sequence is QRQQQNRSQHRNLN. At R385 the chain carries Omega-N-methylarginine. A compositionally biased stretch (basic and acidic residues) spans 385–399; that stretch reads RGSHRSSHQDHLRKD. A region H region spans residues 389–448; that stretch reads RSSHQDHLRKDPYANLMLQREKDWVSKIQMMQLQSTDPYLDDFYYQNYFEKLEKLSAAEE. The involved in nuclear speckle localization stretch occupies residues 398 to 770; the sequence is KDPYANLMLQ…TKLQLVQGIR (373 aa). The region C stretch occupies residues 449–770; the sequence is IQGDGPKKER…TKLQLVQGIR (322 aa).

Belongs to the PAT1 family. Interacts (via region A) with DDX6/RCK. Interacts (via region H and region C) with LSM1 and LSM4. Interacts (via region N) with DCP1A, DCP2, EDC3, EDC4 and XRN1. Interacts with the CCR4-NOT complex. Interacts with the Lsm-containing SMN-Sm protein complex. Interacts with EIF4ENIF1/4E-T. As to expression, ubiquitous.

The protein localises to the cytoplasm. Its subcellular location is the P-body. It is found in the nucleus. It localises to the PML body. The protein resides in the nucleus speckle. Functionally, RNA-binding protein involved in deadenylation-dependent decapping of mRNAs, leading to the degradation of mRNAs. Acts as a scaffold protein that connects deadenylation and decapping machinery. Required for cytoplasmic mRNA processing body (P-body) assembly. In terms of biological role, (Microbial infection) In case of infection, required for translation and replication of hepatitis C virus (HCV). The sequence is that of Protein PAT1 homolog 1 (PATL1) from Homo sapiens (Human).